A 157-amino-acid polypeptide reads, in one-letter code: Protein Smg homolog (157 aa).

The protein belongs to the Smg family.

The polypeptide is Protein Smg homolog (Shewanella pealeana (strain ATCC 700345 / ANG-SQ1)).